We begin with the raw amino-acid sequence, 271 residues long: 4-hydroxy-tetrahydrodipicolinate reductase (271 aa).

NAD(+) is bound by residues 11–16 (GAAGRM), Glu-37, 102–104 (GTT), and 126–129 (AGNM). The active-site Proton donor/acceptor is the His-159. Residue His-160 coordinates (S)-2,3,4,5-tetrahydrodipicolinate. Catalysis depends on Lys-163, which acts as the Proton donor. 169–170 (GT) contributes to the (S)-2,3,4,5-tetrahydrodipicolinate binding site.

This sequence belongs to the DapB family.

It localises to the cytoplasm. It carries out the reaction (S)-2,3,4,5-tetrahydrodipicolinate + NAD(+) + H2O = (2S,4S)-4-hydroxy-2,3,4,5-tetrahydrodipicolinate + NADH + H(+). The catalysed reaction is (S)-2,3,4,5-tetrahydrodipicolinate + NADP(+) + H2O = (2S,4S)-4-hydroxy-2,3,4,5-tetrahydrodipicolinate + NADPH + H(+). Its pathway is amino-acid biosynthesis; L-lysine biosynthesis via DAP pathway; (S)-tetrahydrodipicolinate from L-aspartate: step 4/4. In terms of biological role, catalyzes the conversion of 4-hydroxy-tetrahydrodipicolinate (HTPA) to tetrahydrodipicolinate. The protein is 4-hydroxy-tetrahydrodipicolinate reductase of Parvibaculum lavamentivorans (strain DS-1 / DSM 13023 / NCIMB 13966).